Here is a 61-residue protein sequence, read N- to C-terminus: Metallothionein-1H (61 aa).

At M1 the chain carries N-acetylmethionine. The beta stretch occupies residues 1–29 (MDPNCSCEAGGSCACAGSCKCKKCKCTSC). A divalent metal cation contacts are provided by C5, C7, C13, C15, C19, C21, C24, C26, C29, C33, C34, C36, C37, C41, C44, C48, C50, and C57. Residues 30–61 (KKSCCSCCPLGCAKCAQGCICKGASEKCSCCA) are alpha. Position 58 is a phosphoserine (S58). Residues C59 and C60 each contribute to the a divalent metal cation site.

It belongs to the metallothionein superfamily. Type 1 family. In terms of assembly, monomer.

In terms of biological role, metallothioneins have a high content of cysteine residues that bind various heavy metals; these proteins are transcriptionally regulated by both heavy metals and glucocorticoids. This Homo sapiens (Human) protein is Metallothionein-1H (MT1H).